A 123-amino-acid chain; its full sequence is uncharacterized protein (123 aa).

The helical transmembrane segment at 5–25 (GTLVIIFAIVLILCIMLLFFY) threads the bilayer. Positions 32–53 (KSGVLPPPIPPPTPPPPKKKYD) are disordered. Pro residues predominate over residues 36 to 47 (LPPPIPPPTPPP).

This sequence belongs to the asfivirus CP123L family.

It localises to the host membrane. It is found in the virion. This is an uncharacterized protein from Ornithodoros (relapsing fever ticks).